The sequence spans 1109 residues: Myosin ID heavy chain (1109 aa).

Positions 7 to 687 constitute a Myosin motor domain; sequence HGVDDMVMLS…TVFNLEELRE (681 aa). Residue 101–108 coordinates ATP; sequence GESGAGKT. Residues 564 to 586 are actin-binding; the sequence is IGALVKALSACTPHYIRCIKPNG. One can recognise a TH1 domain in the interval 725–919; it reads KERRRLSIER…VSTPSDGLPA (195 aa). Residues 958-1017 enclose the SH3 domain; sequence NVKPSAKALYDFDAESSMELSFKEGDILTVLDQSSGDWWDAELKGRRGKVPSNYLQLIKN. A disordered region spans residues 1017 to 1109; it reads NAAPPRAGGP…APRGGMAPRV (93 aa). Positions 1030 to 1043 are enriched in low complexity; the sequence is TGNRAPTTTTTSGG.

The protein belongs to the TRAFAC class myosin-kinesin ATPase superfamily. Myosin family. As to quaternary structure, myosin I heavy chain is single-headed. Dimer of a heavy and a light chain. Inability to self-assemble into filaments.

It localises to the cell projection. The protein localises to the pseudopodium. Its subcellular location is the cytoplasm. The protein resides in the cell cortex. Functionally, myosin is a protein that binds to actin and has ATPase activity that is activated by actin. Myosin id may have a role in chemotaxis and aggregation; it could serve to stabilize and even retract cortical structures, such as pseudopods and lamellopods. Involved in the process of phagocytosis. The protein is Myosin ID heavy chain (myoD) of Dictyostelium discoideum (Social amoeba).